We begin with the raw amino-acid sequence, 167 residues long: Centrin-3 (167 aa).

4 consecutive EF-hand domains span residues 25 to 60 (EQKQ…LGFD), 61 to 96 (VKKA…WILE), 98 to 133 (DPHE…LGEN), and 134 to 167 (MSDE…TGDI). Serine 135 carries the phosphoserine modification. Ca(2+) is bound by residues aspartate 147, aspartate 149, aspartate 151, glutamate 153, and glutamate 158.

The protein belongs to the centrin family. As to quaternary structure, monomer. Component of the nuclear pore complex (NPC)-associated TREX-2 complex (transcription and export complex 2), composed of at least GANP, 2 copies of ENY2, PCID2, SEM1/DSS1, and either centrin CETN2 or centrin CETN3. The TREX-2 complex also associates with ALYREF/ALY and with the nucleoporin NUP153. Interacts with USP49.

The protein resides in the cytoplasm. Its subcellular location is the cytoskeleton. It localises to the microtubule organizing center. It is found in the centrosome. The protein localises to the nucleus. The protein resides in the nucleolus. Its subcellular location is the nucleus envelope. It localises to the nuclear pore complex. It is found in the centriole. Functionally, plays a fundamental role in microtubule-organizing center structure and function. As a component of the TREX-2 complex, involved in the export of mRNAs to the cytoplasm through the nuclear pores. This Homo sapiens (Human) protein is Centrin-3 (CETN3).